A 125-amino-acid chain; its full sequence is Ribosome-binding factor A (125 aa).

It belongs to the RbfA family. Monomer. Binds 30S ribosomal subunits, but not 50S ribosomal subunits or 70S ribosomes.

It is found in the cytoplasm. One of several proteins that assist in the late maturation steps of the functional core of the 30S ribosomal subunit. Associates with free 30S ribosomal subunits (but not with 30S subunits that are part of 70S ribosomes or polysomes). Required for efficient processing of 16S rRNA. May interact with the 5'-terminal helix region of 16S rRNA. The chain is Ribosome-binding factor A from Acidovorax sp. (strain JS42).